The sequence spans 150 residues: D-galactose-binding lectin (150 aa).

Residues His16 and Gly19 each coordinate D-galactose. N-linked (GlcNAc...) asparagine glycosylation is present at Asn26. D-galactose contacts are provided by residues Asp35–His37, His64, and Gly67. An N-linked (GlcNAc...) asparagine glycan is attached at Asn74. D-galactose is bound by residues Asp83 to His85, His108, and Gly111. N-linked (GlcNAc...) asparagine glycosylation is present at Asn118. Position 127-129 (Asp127–His129) interacts with D-galactose.

As to quaternary structure, oligomerizes in solution. The N-terminus is blocked. Expressed in mantle. Expressed 51 and 1.6 fold in mantle and gonads, respectively, relative to that in hemocytes. Expressed at a much lower level in other tissues tested including gill, muscle and hepatopancreas.

With respect to regulation, hemagglutinating activity does not require Ca(2+) ions. Hemagglutinating activity is inhibited by porcine stomach mucin (PSM), bovine submaxillary mucin (BSM) and fetuin. Agglutination of V.proteolyticus bacteria is inhibited by D-galactose, but not by D-glucose. Fungal binding is inhibited by D-galactose, but not by pathogen-associated molecular patterns (PAMPs) including lipopolysaccharide (LPS), peptidoglycan and beta-glucan. In terms of biological role, D-galactose-binding lectin. Binds both alpha and beta anomer of galactose (Gal). Binds strongly to branched beta-Gal-terminated glycans and weakly to unbranched glycans with alpha-Gal on the end of chains. Has strong affinity for both Gal and GalNAc. Binds glycoproteins containing mucin-type chains. Has hemagglutinating activity towards human group A erythrocytes. Has hemagglutinating activity towards rabbit erythrocytes. Agglutinates V.proteolyticus bacteria. Binds strongly to fungi including species from genera Aspergillus, Alternaria, Fusarium and Haematonectria, and to a lesser extent to fungi from genera Trichoderma. Decreases conidia germination and hyphal growth of fungi. At high concentration, stimulates secretion of cytokines TNF-alpha and IFN-gamma from human peripheral blood cells, and at low concentration reduces hyperexpression of cytokine IL-10 in these cells, indicative of immunomodulatory capability. However, has no effect on IL-4 production. Recognizes pathogen-associated molecular patterns (PAMPs) and binds to peptidoglycan from S.aureus, but has only little binding to beta-1,3-glucan from E.gracilis and lipopolysaccharide (LPS) from E.coli. May be involved in innate immunity acting as an antibacterial or antifungal agent recognizing carbohydrate ligands on the surface of pathogens. The protein is D-galactose-binding lectin of Mytilus trossulus (Blue mussel).